An 844-amino-acid chain; its full sequence is Meiotically up-regulated gene 61 protein (844 aa).

Disordered regions lie at residues 333–354 (ENNSFSWTHPKKNSSSPLPQSQ) and 384–415 (NFGLEASNTSTPEKKKFDSQKPDDDSVNEISS). Over residues 384–394 (NFGLEASNTST) the composition is skewed to polar residues. Over residues 395-407 (PEKKKFDSQKPDD) the composition is skewed to basic and acidic residues. Residues 459–479 (VVNSLWLVLLVVPLLGFVGFW) traverse the membrane as a helical segment. An ATP-binding site is contributed by 605–612 (AKNLNGKS). A helical transmembrane segment spans residues 705 to 725 (VISCWRIYLLIGILAAITGTV).

As to quaternary structure, interacts with sad1.

The protein resides in the endoplasmic reticulum membrane. It is found in the nucleus membrane. Functionally, required for correct meiotic chromosome segregation. This chain is Meiotically up-regulated gene 61 protein (mug61), found in Schizosaccharomyces pombe (strain 972 / ATCC 24843) (Fission yeast).